Reading from the N-terminus, the 271-residue chain is Short-chain type dehydrogenase/reductase (271 aa).

25–49 (IVTGASRGIGREIALNMAEKGAKVV) contacts NAD(+). Substrate is bound at residue serine 166. Tyrosine 179 serves as the catalytic Proton acceptor.

Belongs to the short-chain dehydrogenases/reductases (SDR) family.

The polypeptide is Short-chain type dehydrogenase/reductase (Picea abies (Norway spruce)).